We begin with the raw amino-acid sequence, 341 residues long: Type II restriction enzyme BgcI specificity subunit S.BcgI (341 aa).

This sequence belongs to the type-I restriction system S methylase family. In terms of assembly, heterotrimer of two A and one B subunit. Both subunits are necessary for DNA-binding, which is sequence non-specific. The cofactor is Mg(2+).

It catalyses the reaction Endonucleolytic cleavage of DNA to give specific double-stranded fragments with terminal 5'-phosphates.. Its activity is regulated as follows. DNA restriction requires S-adenosyl-L-methionine and Mg(2+), and is inhibited by S-adenosyl-homocysteine. SAM may be a cofactor for DNA restriction. Functionally, the specificity subunit. A B, G, H and S subtype restriction enzyme that recognizes the double-stranded sequence 5'-CGAN(6)TGC-3' and cleaves bilaterally and symmetrically 10 base pairs upstream and 12 base pairs downstream of the sequence to release a 34-base pair fragment. Methylation of the recognition sequence occurs on the adenine in either one or both strands; seems to methylate restricted DNA. This subunit degrades DNA in a non-specific manner. The protein is Type II restriction enzyme BgcI specificity subunit S.BcgI of Heyndrickxia coagulans (Weizmannia coagulans).